The following is a 1770-amino-acid chain: U3 small nucleolar RNA-associated protein 10 (1770 aa).

A run of 2 helical transmembrane segments spans residues 499-519 (ILGLFIEAIGTGYQAGLFLSS) and 528-548 (LTFLLRVIVSPSAPIALRLLA). The stretch at 1730–1768 (MVPIIAELLEDDNEEVESEVRGGLVRVMENVLGEPFDRY) is one HEAT repeat.

Belongs to the HEATR1/UTP10 family. Component of the ribosomal small subunit (SSU) processome.

The protein localises to the nucleus. Its subcellular location is the nucleolus. It localises to the membrane. Functionally, involved in nucleolar processing of pre-18S ribosomal RNA. Involved in ribosome biosynthesis. This is U3 small nucleolar RNA-associated protein 10 from Candida glabrata (strain ATCC 2001 / BCRC 20586 / JCM 3761 / NBRC 0622 / NRRL Y-65 / CBS 138) (Yeast).